The chain runs to 498 residues: MTTKKLYFLSISIIILVAISIAIYITLNSNTKTRLTNDSQQQIDTIIEHDLQKGHIPGASILIVKNGKVFLNKGYGYQDVDKKVKASPTTKYEIASNTKAFTGLAILKLAQEGRLNLNDAVSKHVPHFKMNYNGQNETITIKQLLAQTSGIPSDITSEDSVTSKNNRLNDVTHAIMGDELHHKPGEEFEYSNMNYDLLGLIIQNVTKQSYTKYITNSWLKPLHMTHTSFKQTNYKSKHDAIGYELQGSTPVVSKPEFNLWDTPSAYMMTSTEDLEHWIKFQLNPPDKYKSLVQQSHKNLSSTIGEPNANAYASGWFTNNDEHLVFHSGTLDNFSSFILLNPKQNYGIVVLANLNSEYVPKLVEHLNTQIVNHKRYSTVASMLNQYKDQFNIVTVLMTTLILLAFIFSAYRAWQMRHGQILLRRSKRIAVLSWLSLCICIALALILYALPYLILGSNNWSFVLTWLPIEIKLALITTLIALFSTLIVILLFLHTKITKT.

The next 4 membrane-spanning stretches (helical) occupy residues 6-26 (LYFLSISIIILVAISIAIYIT), 389-409 (FNIVTVLMTTLILLAFIFSAY), 433-453 (LSLCICIALALILYALPYLIL), and 471-491 (LALITTLIALFSTLIVILLFL).

The protein localises to the cell membrane. Its function is as follows. Its precise function is unknown. Has no penicillin-binding activity and is not involved in methicillin resistance. The sequence is that of Protein flp (flp) from Staphylococcus aureus (strain NCTC 8325 / PS 47).